Reading from the N-terminus, the 72-residue chain is Disintegrin basilicin (72 aa).

The 72-residue stretch at 1-72 (AGEECDCGSP…ADCPRNHFHA (72 aa)) folds into the Disintegrin domain. 6 disulfides stabilise this stretch: C5/C20, C7/C15, C14/C37, C28/C34, C33/C58, and C46/C65. The Cell attachment site motif lies at 50–52 (RGD).

It belongs to the venom metalloproteinase (M12B) family. P-II subfamily. P-IIa sub-subfamily. In terms of assembly, monomer (disintegrin). As to expression, expressed by the venom gland.

It localises to the secreted. In terms of biological role, inhibits fibrinogen interaction with platelets. Acts by binding to alpha-IIb/beta-3 (ITGA2B/ITGB3) on the platelet surface and inhibits aggregation induced by ADP, thrombin, platelet-activating factor and collagen. The polypeptide is Disintegrin basilicin (Crotalus basiliscus (Mexican west-coast rattlesnake)).